Here is a 258-residue protein sequence, read N- to C-terminus: MKHSKKTYDSFQDELEDYIKVQKARGLEPKTCFRKMRGDYLETCGYKGEVNSRPTYRMFDQRLPPETIQTYPRSCTISQTVENRLPQWLPAHDSRLRLDSLSYCQFTRDCFSEKPVPLNFDQQEYICGSHGVEPRVYKHFSDNSTSTHQASHKQIHQKRKRHPEEGREKSEEEWSKHKRKKSCKEIDLDKHKSIQRKKTEVEIETVHVSTEKLKNRKEKKGRDVVSKKEERKRTKKKKEQGQERTEEEMLWDQSILGF.

Residues 142–258 (DNSTSTHQAS…MLWDQSILGF (117 aa)) form a disordered region. The segment covering 150 to 161 (ASHKQIHQKRKR) has biased composition (basic residues). Composition is skewed to basic and acidic residues over residues 162-175 (HPEEGREKSEEEWS), 183-213 (CKEIDLDKHKSIQRKKTEVEIETVHVSTEKL), and 220-232 (KGRDVVSKKEERK). Positions 211–248 (EKLKNRKEKKGRDVVSKKEERKRTKKKKEQGQERTEEE) form a coiled coil.

The sequence is that of Lysine-rich coiled-coil protein 1 (KRCC1) from Pongo abelii (Sumatran orangutan).